An 812-amino-acid polypeptide reads, in one-letter code: DNA translocase FtsK 1 (812 aa).

A compositionally biased stretch (basic residues) spans 1-11; it reads MTEKSHKKTAK. The segment at 1 to 36 is disordered; that stretch reads MTEKSHKKTAKGRAGSPSPTSARNKKADNGARGNKV. The segment covering 25 to 36 has biased composition (basic and acidic residues); that stretch reads KKADNGARGNKV. The next 5 helical transmembrane spans lie at 63–83, 116–136, 156–176, 184–204, and 210–230; these read IGDALWLMGLAATLYLAISLI, VGYYLFGWSFWWWIAAACVVL, IAAAALFVLTVFSPVLEYFVL, LPVGAGGMVGIRVGAVFAWLL, and LLIILVVLLLSLSLLVQISWL. Over 231 to 812 the chain is Cytoplasmic; the sequence is EFLNGAGRAV…RKILAHKDHL (582 aa). In terms of domain architecture, FtsK spans 461-670; the sequence is GTPVVGDLAK…FTVQSKIDSR (210 aa). ATP is bound at residue 481–486; the sequence is GSGKSV.

The protein belongs to the FtsK/SpoIIIE/SftA family. Homohexamer. Forms a ring that surrounds DNA.

The protein localises to the cell inner membrane. In terms of biological role, essential cell division protein that coordinates cell division and chromosome segregation. The N-terminus is involved in assembly of the cell-division machinery. The C-terminus functions as a DNA motor that moves dsDNA in an ATP-dependent manner towards the dif recombination site, which is located within the replication terminus region. Translocation stops specifically at Xer-dif sites, where FtsK interacts with the Xer recombinase, allowing activation of chromosome unlinking by recombination. FtsK orienting polar sequences (KOPS) guide the direction of DNA translocation. FtsK can remove proteins from DNA as it translocates, but translocation stops specifically at XerCD-dif site, thereby preventing removal of XerC and XerD from dif. In Neisseria meningitidis serogroup B (strain ATCC BAA-335 / MC58), this protein is DNA translocase FtsK 1 (ftsK1).